The chain runs to 341 residues: Small ribosomal subunit biogenesis GTPase RsgA (341 aa).

The CP-type G domain maps to 112–268 (RQQLIAANLD…LIDTPGMREL (157 aa)). GTP-binding positions include 157 to 160 (TKVD) and 210 to 218 (GSSGAGKST). The Zn(2+) site is built by Cys290, Cys295, His297, and Cys303.

The protein belongs to the TRAFAC class YlqF/YawG GTPase family. RsgA subfamily. Monomer. Associates with 30S ribosomal subunit, binds 16S rRNA. Requires Zn(2+) as cofactor.

The protein resides in the cytoplasm. One of several proteins that assist in the late maturation steps of the functional core of the 30S ribosomal subunit. Helps release RbfA from mature subunits. May play a role in the assembly of ribosomal proteins into the subunit. Circularly permuted GTPase that catalyzes slow GTP hydrolysis, GTPase activity is stimulated by the 30S ribosomal subunit. This chain is Small ribosomal subunit biogenesis GTPase RsgA, found in Xylella fastidiosa (strain Temecula1 / ATCC 700964).